The following is a 412-amino-acid chain: Chorismate synthase (412 aa).

The NADP(+) site is built by arginine 40 and arginine 46. FMN-binding positions include 134 to 136, 255 to 256, glycine 299, 314 to 318, and arginine 340; these read RAS, QA, and KPIAT.

The protein belongs to the chorismate synthase family. Homotetramer. The cofactor is FMNH2.

The enzyme catalyses 5-O-(1-carboxyvinyl)-3-phosphoshikimate = chorismate + phosphate. Its pathway is metabolic intermediate biosynthesis; chorismate biosynthesis; chorismate from D-erythrose 4-phosphate and phosphoenolpyruvate: step 7/7. Its function is as follows. Catalyzes the anti-1,4-elimination of the C-3 phosphate and the C-6 proR hydrogen from 5-enolpyruvylshikimate-3-phosphate (EPSP) to yield chorismate, which is the branch point compound that serves as the starting substrate for the three terminal pathways of aromatic amino acid biosynthesis. This reaction introduces a second double bond into the aromatic ring system. The chain is Chorismate synthase from Clavibacter michiganensis subsp. michiganensis (strain NCPPB 382).